The primary structure comprises 388 residues: Protein-glutamate methylesterase/protein-glutamine glutaminase (388 aa).

A Response regulatory domain is found at 20 to 138; it reads RVMVVDDSVV…ESAGAEVFRH (119 aa). 4-aspartylphosphate is present on Asp71. One can recognise a CheB-type methylesterase domain in the interval 193-386; it reads PTAPRVLLIG…PKLVRLFSGD (194 aa). Catalysis depends on residues Ser204, His232, and Asp328.

This sequence belongs to the CheB family. In terms of processing, phosphorylated by CheA. Phosphorylation of the N-terminal regulatory domain activates the methylesterase activity.

It localises to the cytoplasm. It catalyses the reaction [protein]-L-glutamate 5-O-methyl ester + H2O = L-glutamyl-[protein] + methanol + H(+). The enzyme catalyses L-glutaminyl-[protein] + H2O = L-glutamyl-[protein] + NH4(+). Involved in chemotaxis. Part of a chemotaxis signal transduction system that modulates chemotaxis in response to various stimuli. Catalyzes the demethylation of specific methylglutamate residues introduced into the chemoreceptors (methyl-accepting chemotaxis proteins or MCP) by CheR. Also mediates the irreversible deamidation of specific glutamine residues to glutamic acid. The sequence is that of Protein-glutamate methylesterase/protein-glutamine glutaminase from Rhodopseudomonas palustris (strain HaA2).